Consider the following 643-residue polypeptide: Phosphomethylpyrimidine synthase (643 aa).

Residues Asn248, Met277, Tyr306, His342, 362–364 (SRG), 403–406 (DGLR), and Glu442 each bind substrate. His446 is a Zn(2+) binding site. Tyr469 contributes to the substrate binding site. Residue His510 coordinates Zn(2+). Positions 590, 593, and 598 each coordinate [4Fe-4S] cluster.

Belongs to the ThiC family. Homodimer. Requires [4Fe-4S] cluster as cofactor.

The catalysed reaction is 5-amino-1-(5-phospho-beta-D-ribosyl)imidazole + S-adenosyl-L-methionine = 4-amino-2-methyl-5-(phosphooxymethyl)pyrimidine + CO + 5'-deoxyadenosine + formate + L-methionine + 3 H(+). It functions in the pathway cofactor biosynthesis; thiamine diphosphate biosynthesis. Functionally, catalyzes the synthesis of the hydroxymethylpyrimidine phosphate (HMP-P) moiety of thiamine from aminoimidazole ribotide (AIR) in a radical S-adenosyl-L-methionine (SAM)-dependent reaction. The sequence is that of Phosphomethylpyrimidine synthase from Burkholderia orbicola (strain MC0-3).